The following is a 572-amino-acid chain: Na(+)/citrate cotransporter (572 aa).

8 helical membrane passes run 13 to 33 (SFVILFFAPILLLPLIILVPD), 53 to 73 (VIPVAITSLLPVLLFPLLKVL), 80 to 100 (VQYMTDTNMLFLGSLIVATAV), 124 to 144 (LMLGFMFVTAFLSMWISNTAT), 218 to 238 (AASIGGTATLTGTGPNVVLLG), 255 to 275 (SWFAFALPNMLLMLVMAWLWL), 315 to 335 (PLSYAECNVLFCFGLLIILWF), and 357 to 377 (HVTDATVAIFVAILLFIVPSQ). Asn382 is a glycosylation site (N-linked (GlcNAc...) asparagine). Helical transmembrane passes span 410-430 (VPWGIVLLLGGGFAMAKGCET), 443-463 (PLSSVRPAIITLILSCIVAMT), 491-511 (PLYVMIPCTLSASLAFMLPVA), and 532-552 (TGLVMNILGIASVFLSVNTWG). N-linked (GlcNAc...) asparagine glycosylation is present at Asn566.

This sequence belongs to the SLC13A/DASS transporter (TC 2.A.47) family. NADC subfamily. In terms of assembly, homodimer. Expressed in liver, testis and brain.

It is found in the cell membrane. It carries out the reaction citrate(out) + 4 Na(+)(out) = citrate(in) + 4 Na(+)(in). With respect to regulation, inhibited by Li(+). In terms of biological role, high-affinity sodium/citrate cotransporter that mediates citrate entry into cells, which is a critical participant of biochemical pathways. May function in various metabolic processes in which citrate has a critical role such as energy production (Krebs cycle), fatty acid synthesis, cholesterol synthesis, glycolysis, and gluconeogenesis. Transports citrate into the cell in a Na(+)-dependent manner, recognizing the trivalent form of citrate (physiological pH) rather than the divalent form. Can recognize succinate as a substrate, but its affinity for succinate is several fold lower than for citrate. The stoichiometry is probably 4 Na(+) for each carboxylate, irrespective of whether the translocated substrate is divalent or trivalent, rendering the process electrogenic. Involved in the regulation of citrate levels in the brain. This chain is Na(+)/citrate cotransporter (Slc13a5), found in Rattus norvegicus (Rat).